We begin with the raw amino-acid sequence, 445 residues long: Trimethylamine monooxygenase (445 aa).

6 residues coordinate FAD: Ser-14, Glu-39, Gln-41, Leu-47, Trp-48, and His-64. NADP(+) contacts are provided by Trp-72 and Asn-74. The FAD site is built by Asn-74 and Val-127. Residues Thr-204, Ser-205, Ser-207, and Arg-228 each coordinate NADP(+). 2 residues coordinate FAD: Gln-317 and Thr-320. Arg-411 is a binding site for NADP(+).

This sequence belongs to the FMO family. FAD serves as cofactor.

The catalysed reaction is trimethylamine + NADPH + O2 = trimethylamine N-oxide + NADP(+) + H2O. In terms of biological role, catalyzes the oxidation of trimethylamine (TMA) to produce trimethylamine N-oxide (TMAO). In vitro, has a broad substrate specificity, oxidizing many nitrogen- and sulfur-containing compounds, including dimethylamine (DMA), dimethylsulfide (DMS) and dimethylsulfoxide (DMSO). The sequence is that of Trimethylamine monooxygenase from Roseovarius sp. (strain 217).